The sequence spans 484 residues: 6-phosphogluconate dehydrogenase, decarboxylating (484 aa).

Residues 10 to 15, 33 to 35, 75 to 77, and Asn-103 contribute to the NADP(+) site; these read GLAVMG, NRT, and IKA. Residues Asn-103 and 129 to 131 contribute to the substrate site; that span reads SGG. Lys-183 functions as the Proton acceptor in the catalytic mechanism. 186–187 serves as a coordination point for substrate; sequence HN. Residue Glu-190 is the Proton donor of the active site. Substrate-binding residues include Tyr-191, Lys-260, Arg-287, Arg-448, and His-454.

This sequence belongs to the 6-phosphogluconate dehydrogenase family. In terms of assembly, homodimer.

The enzyme catalyses 6-phospho-D-gluconate + NADP(+) = D-ribulose 5-phosphate + CO2 + NADPH. It functions in the pathway carbohydrate degradation; pentose phosphate pathway; D-ribulose 5-phosphate from D-glucose 6-phosphate (oxidative stage): step 3/3. Catalyzes the oxidative decarboxylation of 6-phosphogluconate to ribulose 5-phosphate and CO(2), with concomitant reduction of NADP to NADPH. The polypeptide is 6-phosphogluconate dehydrogenase, decarboxylating (Caenorhabditis elegans).